Here is a 353-residue protein sequence, read N- to C-terminus: Photosystem II D2 protein (353 aa).

Residue Thr-2 is modified to N-acetylthreonine. Thr-2 is subject to Phosphothreonine. Residues 41–61 (CAYFALGGWLTGTTFVTSWYT) form a helical membrane-spanning segment. His-118 contributes to the chlorophyll a binding site. Residues 125–141 (GFMLRQFELARSVQLRP) traverse the membrane as a helical segment. 2 residues coordinate pheophytin a: Gln-130 and Asn-143. The chain crosses the membrane as a helical span at residues 153-166 (VFVSVFLIYPLGQS). Chlorophyll a is bound at residue His-198. A helical transmembrane segment spans residues 208–228 (AALLCAIHGATVENTLFEDGD). The a plastoquinone site is built by His-215 and Phe-262. His-215 contacts Fe cation. His-269 lines the Fe cation pocket. Residues 279–295 (GLWMSAIGVVGLALNLR) traverse the membrane as a helical segment.

The protein belongs to the reaction center PufL/M/PsbA/D family. As to quaternary structure, PSII is composed of 1 copy each of membrane proteins PsbA, PsbB, PsbC, PsbD, PsbE, PsbF, PsbH, PsbI, PsbJ, PsbK, PsbL, PsbM, PsbT, PsbX, PsbY, PsbZ, Psb30/Ycf12, at least 3 peripheral proteins of the oxygen-evolving complex and a large number of cofactors. It forms dimeric complexes. The D1/D2 heterodimer binds P680, chlorophylls that are the primary electron donor of PSII, and subsequent electron acceptors. It shares a non-heme iron and each subunit binds pheophytin, quinone, additional chlorophylls, carotenoids and lipids. There is also a Cl(-1) ion associated with D1 and D2, which is required for oxygen evolution. The PSII complex binds additional chlorophylls, carotenoids and specific lipids. is required as a cofactor.

It is found in the plastid. The protein localises to the chloroplast thylakoid membrane. It catalyses the reaction 2 a plastoquinone + 4 hnu + 2 H2O = 2 a plastoquinol + O2. Functionally, photosystem II (PSII) is a light-driven water:plastoquinone oxidoreductase that uses light energy to abstract electrons from H(2)O, generating O(2) and a proton gradient subsequently used for ATP formation. It consists of a core antenna complex that captures photons, and an electron transfer chain that converts photonic excitation into a charge separation. The D1/D2 (PsbA/PsbD) reaction center heterodimer binds P680, the primary electron donor of PSII as well as several subsequent electron acceptors. D2 is needed for assembly of a stable PSII complex. The sequence is that of Photosystem II D2 protein from Zygnema circumcarinatum (Green alga).